The sequence spans 79 residues: D-alanyl carrier protein (79 aa).

Residues 1 to 77 (MDVKETILNI…KIISGVVELM (77 aa)) form the Carrier domain. Position 35 is an O-(pantetheine 4'-phosphoryl)serine (Ser35).

The protein belongs to the DltC family. Post-translationally, 4'-phosphopantetheine is transferred from CoA to a specific serine of apo-DCP.

The protein localises to the cytoplasm. It functions in the pathway cell wall biogenesis; lipoteichoic acid biosynthesis. Carrier protein involved in the D-alanylation of lipoteichoic acid (LTA). The loading of thioester-linked D-alanine onto DltC is catalyzed by D-alanine--D-alanyl carrier protein ligase DltA. The DltC-carried D-alanyl group is further transferred to cell membrane phosphatidylglycerol (PG) by forming an ester bond, probably catalyzed by DltD. D-alanylation of LTA plays an important role in modulating the properties of the cell wall in Gram-positive bacteria, influencing the net charge of the cell wall. In Streptococcus suis (strain 05ZYH33), this protein is D-alanyl carrier protein.